The primary structure comprises 473 residues: Cysteine--tRNA ligase (473 aa).

C29 serves as a coordination point for Zn(2+). Positions 31 to 41 (ATVQSAPHIGH) match the 'HIGH' region motif. Zn(2+) contacts are provided by C207, H232, and E236. Positions 263–267 (KMSKS) match the 'KMSKS' region motif. K266 serves as a coordination point for ATP.

The protein belongs to the class-I aminoacyl-tRNA synthetase family. In terms of assembly, monomer. Zn(2+) serves as cofactor.

The protein resides in the cytoplasm. The enzyme catalyses tRNA(Cys) + L-cysteine + ATP = L-cysteinyl-tRNA(Cys) + AMP + diphosphate. The sequence is that of Cysteine--tRNA ligase from Corynebacterium kroppenstedtii (strain DSM 44385 / JCM 11950 / CIP 105744 / CCUG 35717).